The sequence spans 246 residues: Pyridoxine 5'-phosphate synthase (246 aa).

N12 contacts 3-amino-2-oxopropyl phosphate. 14–15 (DH) provides a ligand contact to 1-deoxy-D-xylulose 5-phosphate. R23 is a 3-amino-2-oxopropyl phosphate binding site. Catalysis depends on H48, which acts as the Proton acceptor. 2 residues coordinate 1-deoxy-D-xylulose 5-phosphate: R50 and H55. E75 acts as the Proton acceptor in catalysis. T105 lines the 1-deoxy-D-xylulose 5-phosphate pocket. Residue H196 is the Proton donor of the active site. 3-amino-2-oxopropyl phosphate-binding positions include G197 and 218-219 (GH).

The protein belongs to the PNP synthase family. As to quaternary structure, homooctamer; tetramer of dimers.

The protein localises to the cytoplasm. The enzyme catalyses 3-amino-2-oxopropyl phosphate + 1-deoxy-D-xylulose 5-phosphate = pyridoxine 5'-phosphate + phosphate + 2 H2O + H(+). It functions in the pathway cofactor biosynthesis; pyridoxine 5'-phosphate biosynthesis; pyridoxine 5'-phosphate from D-erythrose 4-phosphate: step 5/5. In terms of biological role, catalyzes the complicated ring closure reaction between the two acyclic compounds 1-deoxy-D-xylulose-5-phosphate (DXP) and 3-amino-2-oxopropyl phosphate (1-amino-acetone-3-phosphate or AAP) to form pyridoxine 5'-phosphate (PNP) and inorganic phosphate. The polypeptide is Pyridoxine 5'-phosphate synthase (Pseudomonas syringae pv. syringae (strain B728a)).